The sequence spans 157 residues: Mitochondrial inner membrane protease subunit 1 (157 aa).

Residues Ser-35 and Lys-80 contribute to the active site.

Belongs to the peptidase S26 family. IMP1 subfamily. In terms of assembly, heterodimer of 2 subunits, imp1 and imp2.

It is found in the mitochondrion inner membrane. In terms of biological role, catalyzes the removal of transit peptides required for the targeting of proteins from the mitochondrial matrix, across the inner membrane, into the inter-membrane space. The protein is Mitochondrial inner membrane protease subunit 1 (imp1) of Schizosaccharomyces pombe (strain 972 / ATCC 24843) (Fission yeast).